Consider the following 188-residue polypeptide: UPF0461 protein C5orf24 homolog (188 aa).

Position 37 is a phosphoserine (Ser-37). Residue Lys-75 forms a Glycyl lysine isopeptide (Lys-Gly) (interchain with G-Cter in SUMO2) linkage. A compositionally biased stretch (basic residues) spans Lys-80 to Arg-92. Residues Lys-80–Pro-141 are disordered. The span at Ser-94–Gly-107 shows a compositional bias: polar residues. 2 positions are modified to phosphoserine: Ser-121 and Ser-180. Lys-184 participates in a covalent cross-link: Glycyl lysine isopeptide (Lys-Gly) (interchain with G-Cter in SUMO2).

The protein belongs to the UPF0461 family.

This is UPF0461 protein C5orf24 homolog from Mus musculus (Mouse).